The primary structure comprises 177 residues: Large ribosomal subunit protein uL6 (177 aa).

Belongs to the universal ribosomal protein uL6 family. Part of the 50S ribosomal subunit.

Functionally, this protein binds to the 23S rRNA, and is important in its secondary structure. It is located near the subunit interface in the base of the L7/L12 stalk, and near the tRNA binding site of the peptidyltransferase center. The sequence is that of Large ribosomal subunit protein uL6 from Pseudomonas syringae pv. tomato (strain ATCC BAA-871 / DC3000).